The sequence spans 261 residues: Small ribosomal subunit protein uS2 (261 aa).

This sequence belongs to the universal ribosomal protein uS2 family.

The protein is Small ribosomal subunit protein uS2 of Enterococcus faecalis (strain ATCC 700802 / V583).